The chain runs to 341 residues: tRNA N6-adenosine threonylcarbamoyltransferase (341 aa).

H115 and H119 together coordinate Fe cation. Substrate contacts are provided by residues 137–141 (IVSGG), D170, G183, D187, and N276. D304 provides a ligand contact to Fe cation.

It belongs to the KAE1 / TsaD family. Fe(2+) is required as a cofactor.

The protein resides in the cytoplasm. It carries out the reaction L-threonylcarbamoyladenylate + adenosine(37) in tRNA = N(6)-L-threonylcarbamoyladenosine(37) in tRNA + AMP + H(+). Functionally, required for the formation of a threonylcarbamoyl group on adenosine at position 37 (t(6)A37) in tRNAs that read codons beginning with adenine. Is involved in the transfer of the threonylcarbamoyl moiety of threonylcarbamoyl-AMP (TC-AMP) to the N6 group of A37, together with TsaE and TsaB. TsaD likely plays a direct catalytic role in this reaction. The protein is tRNA N6-adenosine threonylcarbamoyltransferase of Staphylococcus aureus (strain MSSA476).